Reading from the N-terminus, the 851-residue chain is Glutathione transporter 1 (851 aa).

Polar residues predominate over residues 1–14 (MTARNSASIPTSIR). The interval 1–116 (MTARNSASIP…LDNETDSEVE (116 aa)) is disordered. N-linked (GlcNAc...) asparagine glycosylation occurs at N32. A compositionally biased stretch (low complexity) spans 33–68 (LSTKTASKTSLTFRQSSSDESTSSYSGNHHNINIQH). The segment covering 74–92 (FRTNSSSFSPNDYSISESP) has biased composition (polar residues). N77 carries N-linked (GlcNAc...) asparagine glycosylation. Residue S93 is modified to Phosphoserine. A coiled-coil region spans residues 105 to 134 (VQLDNETDSEVESEVEELERELEAIEDSVY). An N-linked (GlcNAc...) asparagine glycan is attached at N109. 2 helical membrane passes run 156–176 (TWVL…FFSL) and 179–199 (PALS…GKLL). N-linked (GlcNAc...) asparagine glycosylation is present at N256. Transmembrane regions (helical) follow at residues 259 to 279 (WGYK…FAGL), 282 to 302 (RWIV…TVLF), 333 to 353 (FFAY…FIFK), and 405 to 425 (WVIC…VPIL). N452 and N464 each carry an N-linked (GlcNAc...) asparagine glycan. 5 helical membrane passes run 480–500 (YSMS…HCAL), 531–551 (APQW…IFTV), 560–580 (VWAL…QGVL), 592–612 (IITE…NLMI), and 642–662 (ILFF…VAVQ). The N-linked (GlcNAc...) asparagine glycan is linked to N691. A run of 3 helical transmembrane segments spans residues 711 to 731 (YYPL…TWGL), 757 to 777 (PATG…NYVI), and 791 to 811 (VLAA…FLCV). The N-linked (GlcNAc...) asparagine glycan is linked to N843.

This sequence belongs to the oligopeptide OPT transporter family.

Its subcellular location is the endoplasmic reticulum membrane. It localises to the cell membrane. In terms of biological role, high-affinity glutathione transporter which plays a role in scavenging glutathione from the extracellular environment for the maintenance of sulfur homeostasis. The polypeptide is Glutathione transporter 1 (pgt1) (Schizosaccharomyces pombe (strain 972 / ATCC 24843) (Fission yeast)).